A 281-amino-acid chain; its full sequence is 16S rRNA (guanine(1405)-N(7))-methyltransferase (281 aa).

S-adenosyl-L-methionine is bound by residues Y60, 105–107 (HTS), R111, G136, D160, 186–187 (QG), F203, and Q212.

Belongs to the methyltransferase superfamily. Aminoglycoside resistance family.

It carries out the reaction guanosine(1405) in 16S rRNA + S-adenosyl-L-methionine = N(7)-methylguanosine(1405) in 16S rRNA + S-adenosyl-L-homocysteine. Specifically methylates the N(7) position of guanine 1405 in 16S rRNA. Confers resistance to various aminoglycosides, including gentamicin and kanamycin. In Proteus mirabilis, this protein is 16S rRNA (guanine(1405)-N(7))-methyltransferase (rmtC).